The chain runs to 488 residues: Germacrene A hydroxylase (488 aa).

The Cytoplasmic portion of the chain corresponds to 1–6; sequence MEVSLT. A helical; Signal-anchor for type II membrane protein transmembrane segment spans residues 7-23; that stretch reads TSIALATIVFFLYKLLT. Topologically, residues 24-488 are lumenal; that stretch reads RPTSSKNRLP…KTELMLVPSF (465 aa). Residues N169, N260, N379, and N412 are each glycosylated (N-linked (GlcNAc...) asparagine). C432 provides a ligand contact to heme.

Belongs to the cytochrome P450 family. Heme is required as a cofactor. In terms of tissue distribution, expressed in leaf primordia.

The protein resides in the endoplasmic reticulum membrane. The catalysed reaction is (+)-(R)-germacrene A + 3 reduced [NADPH--hemoprotein reductase] + 3 O2 = germacra-1(10),4,11(13)-trien-12-oate + 3 oxidized [NADPH--hemoprotein reductase] + 4 H2O + 4 H(+). It functions in the pathway secondary metabolite biosynthesis; terpenoid biosynthesis. Involved in the biosynthesis of germacrene-derived sesquiterpene lactones. Catalyzes three consecutive oxidations of germacrene A to produce germacrene A acid. Could also catalyze the three-step oxidation of non-natural substrate amorphadiene to artemisinic acid. The protein is Germacrene A hydroxylase of Helianthus annuus (Common sunflower).